Here is a 257-residue protein sequence, read N- to C-terminus: Imidazole glycerol phosphate synthase subunit HisF (257 aa).

Catalysis depends on residues Asp-11 and Asp-130.

This sequence belongs to the HisA/HisF family. Heterodimer of HisH and HisF.

The protein resides in the cytoplasm. It catalyses the reaction 5-[(5-phospho-1-deoxy-D-ribulos-1-ylimino)methylamino]-1-(5-phospho-beta-D-ribosyl)imidazole-4-carboxamide + L-glutamine = D-erythro-1-(imidazol-4-yl)glycerol 3-phosphate + 5-amino-1-(5-phospho-beta-D-ribosyl)imidazole-4-carboxamide + L-glutamate + H(+). It functions in the pathway amino-acid biosynthesis; L-histidine biosynthesis; L-histidine from 5-phospho-alpha-D-ribose 1-diphosphate: step 5/9. In terms of biological role, IGPS catalyzes the conversion of PRFAR and glutamine to IGP, AICAR and glutamate. The HisF subunit catalyzes the cyclization activity that produces IGP and AICAR from PRFAR using the ammonia provided by the HisH subunit. In Aeromonas hydrophila subsp. hydrophila (strain ATCC 7966 / DSM 30187 / BCRC 13018 / CCUG 14551 / JCM 1027 / KCTC 2358 / NCIMB 9240 / NCTC 8049), this protein is Imidazole glycerol phosphate synthase subunit HisF.